We begin with the raw amino-acid sequence, 274 residues long: NADPH-dependent 7-cyano-7-deazaguanine reductase (274 aa).

80–82 (VES) serves as a coordination point for substrate. 82 to 83 (SK) lines the NADPH pocket. Residue Cys-181 is the Thioimide intermediate of the active site. Asp-188 serves as the catalytic Proton donor. Residue 220–221 (HE) coordinates substrate. Position 249 to 250 (249 to 250 (RG)) interacts with NADPH.

This sequence belongs to the GTP cyclohydrolase I family. QueF type 2 subfamily. In terms of assembly, homodimer.

The protein resides in the cytoplasm. The catalysed reaction is 7-aminomethyl-7-carbaguanine + 2 NADP(+) = 7-cyano-7-deazaguanine + 2 NADPH + 3 H(+). It functions in the pathway tRNA modification; tRNA-queuosine biosynthesis. Its function is as follows. Catalyzes the NADPH-dependent reduction of 7-cyano-7-deazaguanine (preQ0) to 7-aminomethyl-7-deazaguanine (preQ1). This chain is NADPH-dependent 7-cyano-7-deazaguanine reductase, found in Burkholderia ambifaria (strain ATCC BAA-244 / DSM 16087 / CCUG 44356 / LMG 19182 / AMMD) (Burkholderia cepacia (strain AMMD)).